Consider the following 238-residue polypeptide: uncharacterized protein (238 aa).

Positions 1-10 are enriched in basic residues; sequence MARGQNIRKR. Disordered stretches follow at residues 1-26 and 195-238; these read MARG…IGIH and LNTS…YDSF.

This sequence belongs to the asfivirus DP238L family.

This is an uncharacterized protein from Ornithodoros (relapsing fever ticks).